The following is a 715-amino-acid chain: Polyribonucleotide nucleotidyltransferase (715 aa).

Mg(2+) is bound by residues aspartate 493 and aspartate 499. Residues 560–619 enclose the KH domain; sequence PRMITIKINPEKIRDVIGKGGSVIRALTEETGTTIDISDDGVVTIASTSSEGMAEAKKRI. Residues 629–697 enclose the S1 motif domain; the sequence is GQVYEGTVLK…EKGRVRLSAK (69 aa).

It belongs to the polyribonucleotide nucleotidyltransferase family. Mg(2+) is required as a cofactor.

The protein resides in the cytoplasm. The catalysed reaction is RNA(n+1) + phosphate = RNA(n) + a ribonucleoside 5'-diphosphate. Its function is as follows. Involved in mRNA degradation. Catalyzes the phosphorolysis of single-stranded polyribonucleotides processively in the 3'- to 5'-direction. The chain is Polyribonucleotide nucleotidyltransferase from Burkholderia multivorans (strain ATCC 17616 / 249).